Consider the following 215-residue polypeptide: 3-isopropylmalate dehydratase small subunit (215 aa).

The protein belongs to the LeuD family. LeuD type 1 subfamily. As to quaternary structure, heterodimer of LeuC and LeuD.

The catalysed reaction is (2R,3S)-3-isopropylmalate = (2S)-2-isopropylmalate. Its pathway is amino-acid biosynthesis; L-leucine biosynthesis; L-leucine from 3-methyl-2-oxobutanoate: step 2/4. Its function is as follows. Catalyzes the isomerization between 2-isopropylmalate and 3-isopropylmalate, via the formation of 2-isopropylmaleate. The chain is 3-isopropylmalate dehydratase small subunit from Xylella fastidiosa (strain M23).